The sequence spans 495 residues: RNA-binding KH domain-containing protein PEPPER (495 aa).

KH domains are found at residues 73–140 (DCVF…MDAV), 165–234 (FSSV…LEAI), and 340–403 (QVSQ…EQLI). A disordered region spans residues 474-495 (GQTYGSEYRPASDVGGYSSYNL).

Interacts with HUA1 and HEN4. Detected in roots, shoots, leaves, flowers and fruits.

The protein resides in the nucleus. Its function is as follows. Regulates vegetative and gynoecium development. In concert with HUA2, antagonizes FLK by positively regulating FLC probably at transcriptional and post-transcriptional levels, and thus acts as a negative regulator of flowering. In Arabidopsis thaliana (Mouse-ear cress), this protein is RNA-binding KH domain-containing protein PEPPER.